Here is a 459-residue protein sequence, read N- to C-terminus: Cobyrinate a,c-diamide synthase (459 aa).

Positions 249–446 constitute a GATase cobBQ-type domain; sequence RIGMAFDEAF…VHTHFASRPG (198 aa). Catalysis depends on Cys-332, which acts as the Nucleophile.

Belongs to the CobB/CbiA family. Mg(2+) is required as a cofactor.

The enzyme catalyses cob(II)yrinate + 2 L-glutamine + 2 ATP + 2 H2O = cob(II)yrinate a,c diamide + 2 L-glutamate + 2 ADP + 2 phosphate + 2 H(+). It participates in cofactor biosynthesis; adenosylcobalamin biosynthesis; cob(II)yrinate a,c-diamide from sirohydrochlorin (anaerobic route): step 10/10. Its function is as follows. Catalyzes the ATP-dependent amidation of the two carboxylate groups at positions a and c of cobyrinate, using either L-glutamine or ammonia as the nitrogen source. The polypeptide is Cobyrinate a,c-diamide synthase (Syntrophotalea carbinolica (strain DSM 2380 / NBRC 103641 / GraBd1) (Pelobacter carbinolicus)).